Here is a 374-residue protein sequence, read N- to C-terminus: Eukaryotic translation initiation factor 3 subunit M (374 aa).

Position 2 is an N-acetylserine (S2). Phosphoserine is present on residues S2 and S152. A PCI domain is found at 180–339 (AASKVMVELL…RKVVVSHSTH (160 aa)). K254 is subject to N6-acetyllysine. The tract at residues 344–374 (KQQWQQLYDTLNAWKQNLNKVKNSLLSLSDT) is interaction with HSV-1 and HSV-2. Position 367 is a phosphoserine (S367).

Component of the eukaryotic translation initiation factor 3 (eIF-3) complex, which is composed of 13 subunits: EIF3A, EIF3B, EIF3C, EIF3D, EIF3E, EIF3F, EIF3G, EIF3H, EIF3I, EIF3J, EIF3K, EIF3L and EIF3M. The eIF-3 complex appears to include 3 stable modules: module A is composed of EIF3A, EIF3B, EIF3G and EIF3I; module B is composed of EIF3F, EIF3H, and EIF3M; and module C is composed of EIF3C, EIF3D, EIF3E, EIF3K and EIF3L. EIF3C of module C binds EIF3B of module A and EIF3H of module B, thereby linking the three modules. EIF3J is a labile subunit that binds to the eIF-3 complex via EIF3B. The eIF-3 complex interacts with RPS6KB1 under conditions of nutrient depletion. Mitogenic stimulation leads to binding and activation of a complex composed of MTOR and RPTOR, leading to phosphorylation and release of RPS6KB1 and binding of EIF4B to eIF-3. In terms of tissue distribution, broadly expressed.

Its subcellular location is the cytoplasm. Functionally, component of the eukaryotic translation initiation factor 3 (eIF-3) complex, which is required for several steps in the initiation of protein synthesis. The eIF-3 complex associates with the 40S ribosome and facilitates the recruitment of eIF-1, eIF-1A, eIF-2:GTP:methionyl-tRNAi and eIF-5 to form the 43S pre-initiation complex (43S PIC). The eIF-3 complex stimulates mRNA recruitment to the 43S PIC and scanning of the mRNA for AUG recognition. The eIF-3 complex is also required for disassembly and recycling of post-termination ribosomal complexes and subsequently prevents premature joining of the 40S and 60S ribosomal subunits prior to initiation. The eIF-3 complex specifically targets and initiates translation of a subset of mRNAs involved in cell proliferation, including cell cycling, differentiation and apoptosis, and uses different modes of RNA stem-loop binding to exert either translational activation or repression. In terms of biological role, (Microbial infection) May favor virus entry in case of infection with herpes simplex virus 1 (HSV1) or herpes simplex virus 2 (HSV2). The sequence is that of Eukaryotic translation initiation factor 3 subunit M from Homo sapiens (Human).